A 478-amino-acid chain; its full sequence is Amino acid oxidase imqH (478 aa).

Positions 1-22 (MPAPKSIIIVGSGVFGLSTAHA) are cleaved as a signal peptide. Residues Val14, Phe15, Asp38, Asn53, Ala57, Asn58, Arg63, and Ile64 each coordinate FAD. N-linked (GlcNAc...) asparagine glycosylation is found at Asn97 and Asn167. Val208 contacts FAD. Residue Cys399 is modified to S-8alpha-FAD cysteine. The FAD site is built by Phe432 and Lys433.

The protein belongs to the MSOX/MTOX family. Dimer. The cofactor is FAD.

Its pathway is secondary metabolite biosynthesis. In terms of biological role, nonribosomal peptide synthetase; part of the gene cluster that mediates the biosynthesis of imizoquins A to D, tripeptide-derived alkaloids that serve a protective role against oxidative stress that are essential for normal germination. ImqB is a canonical three-module NRPS that assembles the tripeptide backbone of the imizoquins via condensation of Trp, Tyr, and Leu-derived precursors. N-methylation by imqF and phenol oxidation by imqC, followed by cyclization via the FAD-dependent oxidase imqH carry out the three-step transformation of L-tyrosine into tetrahydroisoquinoline. Importantly, this sequence requires the presence of a free amine in the tyrosine moiety, indicating that isoquinoline formation occurs prior to peptide bond formation. The imidazolidin-4-one ring of imizoquins could form following additional oxidation of the methyl-derived bridgehead carbon by imqH. Lastly, O-methylation by imqG and leucine hydroxylation by imqE complete biosynthesis of the imizoquins. In Aspergillus flavus (strain ATCC 200026 / FGSC A1120 / IAM 13836 / NRRL 3357 / JCM 12722 / SRRC 167), this protein is Amino acid oxidase imqH.